Consider the following 335-residue polypeptide: DNA primase small subunit PriS (335 aa).

Catalysis depends on residues Asp-96, Asp-98, and Asp-243.

Belongs to the eukaryotic-type primase small subunit family. Heterodimer of a small subunit (PriS) and a large subunit (PriL). Mg(2+) serves as cofactor. Requires Mn(2+) as cofactor.

Catalytic subunit of DNA primase, an RNA polymerase that catalyzes the synthesis of short RNA molecules used as primers for DNA polymerase during DNA replication. The small subunit contains the primase catalytic core and has DNA synthesis activity on its own. Binding to the large subunit stabilizes and modulates the activity, increasing the rate of DNA synthesis while decreasing the length of the DNA fragments, and conferring RNA synthesis capability. The DNA polymerase activity may enable DNA primase to also catalyze primer extension after primer synthesis. May also play a role in DNA repair. The sequence is that of DNA primase small subunit PriS from Archaeoglobus fulgidus (strain ATCC 49558 / DSM 4304 / JCM 9628 / NBRC 100126 / VC-16).